A 280-amino-acid polypeptide reads, in one-letter code: Four and a half LIM domains protein 3 (280 aa).

An N-acetylserine modification is found at S2. The segment at 7–31 (CAKCNESLYGRKYIQTDSGPYCVPC) adopts a C4-type zinc-finger fold. LIM zinc-binding domains are found at residues 40–92 (CAEC…CNDC) and 101–153 (CSAC…CVPC). K157 carries the post-translational modification N6-acetyllysine. 2 LIM zinc-binding domains span residues 162–212 (CARC…CVAC) and 221–275 (CSSC…CQGC). K235 bears the N6-acetyllysine mark.

In terms of assembly, interacts with SOX15; the interaction recruits FHL3 to FOXK1 promoters where it acts as a transcriptional coactivator of FOXK1. In terms of tissue distribution, expressed only in skeletal muscle.

It is found in the nucleus. The protein localises to the cytoplasm. Recruited by SOX15 to FOXK1 promoters where it acts as a transcriptional coactivator of FOXK1. The sequence is that of Four and a half LIM domains protein 3 (FHL3) from Homo sapiens (Human).